A 457-amino-acid chain; its full sequence is ADP-dependent glucose/glucosamine kinase (457 aa).

Positions 5-457 (TNWESLYEKA…SAFVSEFSLH (453 aa)) constitute an ADPK domain. D-glucose-binding positions include D37, E91, 115–116 (GQ), and H179. E269 is a binding site for Mg(2+). N295 lines the ADP pocket. Residue E298 coordinates Mg(2+). ADP-binding positions include 345–346 (HT), V432, and G442. D443 provides a ligand contact to D-glucose. Mg(2+) is bound at residue D443. The active-site Proton acceptor is D443.

It belongs to the ADP-dependent glucokinase family. The cofactor is Mg(2+).

Its subcellular location is the cytoplasm. It catalyses the reaction D-glucose + ADP = D-glucose 6-phosphate + AMP + H(+). It carries out the reaction D-glucosamine + ADP = D-glucosamine 6-phosphate + AMP + H(+). Its pathway is carbohydrate degradation; glycolysis. Its activity is regulated as follows. Inhibited by 8-bromoadenosine phosphate (8-Br-AMP). Its function is as follows. Catalyzes the ADP-dependent phosphorylation of D-glucose to D-glucose 6-phosphate and glucosamine to glucosamine 6-phosphate. The sequence is that of ADP-dependent glucose/glucosamine kinase from Pyrococcus horikoshii (strain ATCC 700860 / DSM 12428 / JCM 9974 / NBRC 100139 / OT-3).